We begin with the raw amino-acid sequence, 340 residues long: MTEQQPIAVLGGGSFGTAIANLLAENGQAVRQWMRDPEQAEAIRTRRENPRYLKGVKVHPGVEPVTDLERTLADCQLIFVALPSSALRKVLQPHQAALTDKLLVSLTKGIEAHTFKLMSEILEEIAPQARIGVISGPNLAREIAEHELTATVVASEDDELCARVQAALHGRTFRVYASRDRFGVELGGALKNVYAIMAGLAAAMDMGENTRSMLITRALAEMTRFAVKLGANPMTFLGLAGVGDLIVTCSSPKSRNYQVGHALGEGLSLEEAVSRMGETAEGVNTLKVLKEKSDEMQVYMPLVAGLHAILFEGRTLAQVIQLLMRGEPKTDVDFIPTTGF.

The NADPH site is built by Ser14, Phe15, Arg35, and Lys108. Residues Lys108 and Gly136 each contribute to the sn-glycerol 3-phosphate site. Ala140 is a binding site for NADPH. Residues Lys191, Asp244, Ser254, Arg255, and Asn256 each contribute to the sn-glycerol 3-phosphate site. The Proton acceptor role is filled by Lys191. Arg255 is an NADPH binding site. Position 281 (Glu281) interacts with NADPH.

The protein belongs to the NAD-dependent glycerol-3-phosphate dehydrogenase family.

Its subcellular location is the cytoplasm. The enzyme catalyses sn-glycerol 3-phosphate + NAD(+) = dihydroxyacetone phosphate + NADH + H(+). It carries out the reaction sn-glycerol 3-phosphate + NADP(+) = dihydroxyacetone phosphate + NADPH + H(+). Its pathway is membrane lipid metabolism; glycerophospholipid metabolism. Its function is as follows. Catalyzes the reduction of the glycolytic intermediate dihydroxyacetone phosphate (DHAP) to sn-glycerol 3-phosphate (G3P), the key precursor for phospholipid synthesis. In Pseudomonas aeruginosa (strain LESB58), this protein is Glycerol-3-phosphate dehydrogenase [NAD(P)+].